A 445-amino-acid chain; its full sequence is C-terminal-binding protein 2 (445 aa).

The residue at position 22 (R22) is an Asymmetric dimethylarginine. Residues S106, I186 to T191, D210, C243 to N249, A270 to R272, and D296 contribute to the NAD(+) site. R272 is an active-site residue. E301 is an active-site residue. H321 functions as the Proton donor in the catalytic mechanism. H321–W324 is a binding site for NAD(+). The interval T414–Q445 is disordered. S428 is subject to Phosphoserine. Basic and acidic residues predominate over residues K434 to Q445.

This sequence belongs to the D-isomer specific 2-hydroxyacid dehydrogenase family. In terms of assembly, interacts with the C-terminus of adenovirus E1A protein. Can form homodimers or heterodimers of CTBP1 and CTBP2. Interacts with HIPK2. Interacts with ZNF217, PNN, NRIP1 and WIZ. Interacts with PRDM16; represses white adipose tissue (WAT)-specific genes expression. Interacts with MCRIP1. In terms of tissue distribution, isoform 2 is specifically localized in synaptic ribbon (at protein level).

It localises to the nucleus. It is found in the synapse. Functionally, corepressor targeting diverse transcription regulators. Functions in brown adipose tissue (BAT) differentiation. Isoform 2 probably acts as a scaffold for specialized synapses. This is C-terminal-binding protein 2 (CTBP2) from Bos taurus (Bovine).